A 286-amino-acid polypeptide reads, in one-letter code: Formamidopyrimidine-DNA glycosylase (286 aa).

The Schiff-base intermediate with DNA role is filled by P2. Residue E3 is the Proton donor of the active site. K61 serves as the catalytic Proton donor; for beta-elimination activity. Positions 96, 117, and 160 each coordinate DNA. The FPG-type zinc-finger motif lies at 246–280; that stretch reads DAYGREGLPCRRCATPMRRRPWMNRSSYFCPKCQR. Catalysis depends on R270, which acts as the Proton donor; for delta-elimination activity.

The protein belongs to the FPG family. As to quaternary structure, monomer. It depends on Zn(2+) as a cofactor.

The enzyme catalyses Hydrolysis of DNA containing ring-opened 7-methylguanine residues, releasing 2,6-diamino-4-hydroxy-5-(N-methyl)formamidopyrimidine.. It carries out the reaction 2'-deoxyribonucleotide-(2'-deoxyribose 5'-phosphate)-2'-deoxyribonucleotide-DNA = a 3'-end 2'-deoxyribonucleotide-(2,3-dehydro-2,3-deoxyribose 5'-phosphate)-DNA + a 5'-end 5'-phospho-2'-deoxyribonucleoside-DNA + H(+). In terms of biological role, involved in base excision repair of DNA damaged by oxidation or by mutagenic agents. Acts as a DNA glycosylase that recognizes and removes damaged bases. Has a preference for oxidized purines, such as 7,8-dihydro-8-oxoguanine (8-oxoG). Has AP (apurinic/apyrimidinic) lyase activity and introduces nicks in the DNA strand. Cleaves the DNA backbone by beta-delta elimination to generate a single-strand break at the site of the removed base with both 3'- and 5'-phosphates. This Streptomyces avermitilis (strain ATCC 31267 / DSM 46492 / JCM 5070 / NBRC 14893 / NCIMB 12804 / NRRL 8165 / MA-4680) protein is Formamidopyrimidine-DNA glycosylase.